A 1141-amino-acid chain; its full sequence is DNA-directed RNA polymerase subunit beta (1141 aa).

The protein belongs to the RNA polymerase beta chain family. In terms of assembly, the RNAP catalytic core consists of 2 alpha, 1 beta, 1 beta' and 1 omega subunit. When a sigma factor is associated with the core the holoenzyme is formed, which can initiate transcription.

It catalyses the reaction RNA(n) + a ribonucleoside 5'-triphosphate = RNA(n+1) + diphosphate. In terms of biological role, DNA-dependent RNA polymerase catalyzes the transcription of DNA into RNA using the four ribonucleoside triphosphates as substrates. This chain is DNA-directed RNA polymerase subunit beta, found in Frankia casuarinae (strain DSM 45818 / CECT 9043 / HFP020203 / CcI3).